The primary structure comprises 302 residues: Deoxyribonuclease-1-like 1 (302 aa).

Residues 1 to 18 (MHYPTALLFLILVNGAQA) form the signal peptide. Residues Glu-97 and His-148 contribute to the active site. A disulfide bridge links Cys-187 with Cys-224. Asn-261 is a glycosylation site (N-linked (GlcNAc...) asparagine).

Belongs to the DNase I family.

The protein resides in the endoplasmic reticulum. The chain is Deoxyribonuclease-1-like 1 (DNASE1L1) from Chlorocebus aethiops (Green monkey).